We begin with the raw amino-acid sequence, 276 residues long: Large ribosomal subunit protein uL2 (276 aa).

The disordered stretch occupies residues 218–255; sequence PTVRGSAMNPCDHPHGGGEGRTPIGMSSPVTPWGKPAL.

Belongs to the universal ribosomal protein uL2 family. In terms of assembly, part of the 50S ribosomal subunit. Forms a bridge to the 30S subunit in the 70S ribosome.

One of the primary rRNA binding proteins. Required for association of the 30S and 50S subunits to form the 70S ribosome, for tRNA binding and peptide bond formation. It has been suggested to have peptidyltransferase activity; this is somewhat controversial. Makes several contacts with the 16S rRNA in the 70S ribosome. This chain is Large ribosomal subunit protein uL2, found in Clostridium tetani (strain Massachusetts / E88).